The primary structure comprises 281 residues: Apolipoprotein E (281 aa).

A signal peptide spans 1-18; sequence MKVLWAALLIALLAGCQG. 5 consecutive repeat copies span residues 82 to 103, 104 to 125, 126 to 147, 148 to 169, and 198 to 219. Residues 82–219 are 5 X 22 AA approximate tandem repeats; it reads ALMDETMKEL…RLDEVKEQVE (138 aa). Met145 carries the post-translational modification Methionine sulfoxide. The residue at position 149 (Ser149) is a Phosphoserine. The LDL and other lipoprotein receptors binding stretch occupies residues 160 to 170; the sequence is HLRKLRTVSYT. Residues 164-167 and 193-200 each bind heparin; these read LRTV and GERLRTRM. The interval 230 to 281 is homooligomerization; the sequence is QQMRLQAEAFQARLKSWFEPLVEDMQRQWAGLVEKVQAAVGASAAPVPSDNH. A specificity for association with VLDL region spans residues 242-254; sequence RLKSWFEPLVEDM.

The protein belongs to the apolipoprotein A1/A4/E family. Homotetramer. May interact with ABCA1; functionally associated with ABCA1 in the biogenesis of HDLs. May interact with APP/A4 amyloid-beta peptide; the interaction is extremely stable in vitro but its physiological significance is unclear. May interact with MAPT. May interact with MAP2. In the cerebrospinal fluid, interacts with secreted SORL1. Interacts with PMEL; this allows the loading of PMEL luminal fragment on ILVs to induce fibril nucleation. APOE exists as multiple glycosylated and sialylated glycoforms within cells and in plasma. The extent of glycosylation and sialylation are tissue and context specific. In terms of processing, glycated in plasma VLDL. Post-translationally, phosphorylated by FAM20C in the extracellular medium.

The protein localises to the secreted. The protein resides in the extracellular space. It is found in the extracellular matrix. It localises to the extracellular vesicle. Its subcellular location is the endosome. The protein localises to the multivesicular body. APOE is an apolipoprotein, a protein associating with lipid particles, that mainly functions in lipoprotein-mediated lipid transport between organs via the plasma and interstitial fluids. APOE is a core component of plasma lipoproteins and is involved in their production, conversion and clearance. Apolipoproteins are amphipathic molecules that interact both with lipids of the lipoprotein particle core and the aqueous environment of the plasma. As such, APOE associates with chylomicrons, chylomicron remnants, very low density lipoproteins (VLDL) and intermediate density lipoproteins (IDL) but shows a preferential binding to high-density lipoproteins (HDL). It also binds a wide range of cellular receptors including the LDL receptor/LDLR, the LDL receptor-related proteins LRP1, LRP2 and LRP8 and the very low-density lipoprotein receptor/VLDLR that mediate the cellular uptake of the APOE-containing lipoprotein particles. Finally, APOE also has a heparin-binding activity and binds heparan-sulfate proteoglycans on the surface of cells, a property that supports the capture and the receptor-mediated uptake of APOE-containing lipoproteins by cells. A main function of APOE is to mediate lipoprotein clearance through the uptake of chylomicrons, VLDLs, and HDLs by hepatocytes. APOE is also involved in the biosynthesis by the liver of VLDLs as well as their uptake by peripheral tissues ensuring the delivery of triglycerides and energy storage in muscle, heart and adipose tissues. By participating in the lipoprotein-mediated distribution of lipids among tissues, APOE plays a critical role in plasma and tissues lipid homeostasis. APOE is also involved in two steps of reverse cholesterol transport, the HDLs-mediated transport of cholesterol from peripheral tissues to the liver, and thereby plays an important role in cholesterol homeostasis. First, it is functionally associated with ABCA1 in the biogenesis of HDLs in tissues. Second, it is enriched in circulating HDLs and mediates their uptake by hepatocytes. APOE also plays an important role in lipid transport in the central nervous system, regulating neuron survival and sprouting. In Aotus nancymaae (Ma's night monkey), this protein is Apolipoprotein E (APOE).